The chain runs to 1145 residues: DNA mismatch repair protein msh-3 (1145 aa).

2 disordered regions span residues 1–183 (MAGP…GAKT) and 857–879 (SSSA…LAQL). A compositionally biased stretch (polar residues) spans 13 to 33 (ASISSFFTPRNTSPLVNLSQN). Residues 121-131 (AERKKKEELHR) are compositionally biased toward basic and acidic residues. Positions 158-169 (GEGEEGEDDEEE) are enriched in acidic residues. A mispair-binding domain region spans residues 183–307 (TGKLTPMELQ…RKLTNVYTKG (125 aa)). Position 882–889 (882–889 (GPNMGGKS)) interacts with ATP. Residues 1030 to 1056 (KSRTSMDDDAMEVDGDGDGQEGAGADK) are disordered. The span at 1036–1048 (DDDAMEVDGDGDG) shows a compositional bias: acidic residues.

The protein belongs to the DNA mismatch repair MutS family. MSH3 subfamily. As to quaternary structure, heterodimer consisting of msh-2-msh-3 (MutS beta). Forms a ternary complex with MutL alpha (mlh-1-pms-1).

It is found in the nucleus. Component of the post-replicative DNA mismatch repair system (MMR). Heterodimerizes with msh-2 to form MutS beta, which binds to DNA mismatches thereby initiating DNA repair. Msh-3 provides substrate-binding and substrate specificity to the complex. When bound, the MutS beta heterodimer bends the DNA helix and shields approximately 20 base pairs. Acts mainly to repair insertion-deletion loops (IDLs) from 2 to 13 nucleotides in size, but can also repair base-base and single insertion-deletion mismatches that occur during replication. After mismatch binding, forms a ternary complex with the MutL alpha heterodimer, which is thought to be responsible for directing the downstream MMR events, including strand discrimination, excision, and resynthesis. ATP binding and hydrolysis play a pivotal role in mismatch repair functions. The sequence is that of DNA mismatch repair protein msh-3 (msh-3) from Neurospora crassa (strain ATCC 24698 / 74-OR23-1A / CBS 708.71 / DSM 1257 / FGSC 987).